The sequence spans 100 residues: MHLTSREQEKLMLFLAGELAAKRKARGVKLNYPEAIAYIASHLQEAARDGMSVAEVMQYGATLLTVDDVMGGIAEMVHEVQIEATFPDGTKLVTVHNPIR.

The protein belongs to the urease gamma subunit family. Heterotrimer of UreA (gamma), UreB (beta) and UreC (alpha) subunits. Three heterotrimers associate to form the active enzyme.

The protein resides in the cytoplasm. It catalyses the reaction urea + 2 H2O + H(+) = hydrogencarbonate + 2 NH4(+). It functions in the pathway nitrogen metabolism; urea degradation; CO(2) and NH(3) from urea (urease route): step 1/1. In Actinobacillus pleuropneumoniae (Haemophilus pleuropneumoniae), this protein is Urease subunit gamma.